Reading from the N-terminus, the 95-residue chain is uncharacterized protein (95 aa).

A helical transmembrane segment spans residues 29–53 (LVSTATCMAALFLRFKLIAWVAFIL).

It localises to the membrane. This is an uncharacterized protein from Schizosaccharomyces pombe (strain 972 / ATCC 24843) (Fission yeast).